The chain runs to 170 residues: Small ribosomal subunit protein bS18c (170 aa).

Disordered stretches follow at residues 1-60 (MYTS…GPGD) and 149-170 (NRNLRNNNQNLRNNNRNLSSDC). Repeats lie at residues 4-10 (SKQPFLK), 11-17 (SKQPFSK), 18-24 (SEQPFSK), 25-31 (SEQPFRK), 32-38 (SKQTFRK), 39-45 (FKQPFRK), and 46-52 (SKQPFRR). The segment at 4-52 (SKQPFLKSKQPFSKSEQPFSKSEQPFRKSKQTFRKFKQPFRKSKQPFRR) is 7 X 7 AA tandem repeats. Polar residues predominate over residues 13–26 (QPFSKSEQPFSKSE). Over residues 30-55 (RKSKQTFRKFKQPFRKSKQPFRRRPR) the composition is skewed to basic residues.

The protein belongs to the bacterial ribosomal protein bS18 family. Part of the 30S ribosomal subunit.

Its subcellular location is the plastid. The protein localises to the chloroplast. The polypeptide is Small ribosomal subunit protein bS18c (rps18) (Secale cereale (Rye)).